Here is an 834-residue protein sequence, read N- to C-terminus: ABC transporter A family member 11 (834 aa).

7 consecutive transmembrane segments (helical) span residues 35-55, 188-208, 235-255, 269-289, 297-319, 324-346, and 355-375; these read FFIL…ILNN, MPMI…ILIV, VFDY…LYSF, FLLF…LQFI, NKWL…SVAF, PLIV…LKAL, and SYTI…IYFI. Positions 452–693 constitute an ABC transporter domain; it reads LDKPSIIERC…YGSGYTIDII (242 aa). 495 to 502 contributes to the ATP binding site; the sequence is GPNGSGKS. Positions 779–789 are enriched in polar residues; it reads KQQTNNKSNII. The tract at residues 779 to 834 is disordered; the sequence is KQQTNNKSNIINNNNNNNNNNNNNNNNNNNNNNNNNNNNNNNNNTNNNTNNNQLIN. Low complexity predominate over residues 790-834; it reads NNNNNNNNNNNNNNNNNNNNNNNNNNNNNNNNNTNNNTNNNQLIN.

It belongs to the ABC transporter superfamily. ABCA family.

It is found in the membrane. The chain is ABC transporter A family member 11 (abcA11) from Dictyostelium discoideum (Social amoeba).